Consider the following 273-residue polypeptide: MHEAQIRVAIAGAGGRMGRQLIQAAMAMEGVQLGAALEREGSSLLGSDAGELAGVGKSGVTVQSSLEAVKDDFDVFIDFTRPEGTLTHLAFCRQHGKGMVIGTTGFDDAGKQAIREASQEIAIVFAANFSVGVNVMLKLLEKAAKVMGDYSDIEIIEAHHRHKVDAPSGTALAMGEAIAGALDKDLKDCAVYSREGYTGERVAGTIGFATVRAGDIVGEHTAMFADIGERVEITHKASSRMTFANGALRSALWLKTKKNGLFDMRDVLGLDVL.

NAD(+)-binding positions include glycine 12 to methionine 17 and glutamate 38. Arginine 39 is an NADP(+) binding site. NAD(+)-binding positions include glycine 102 to threonine 104 and alanine 126 to phenylalanine 129. The active-site Proton donor/acceptor is the histidine 159. Histidine 160 provides a ligand contact to (S)-2,3,4,5-tetrahydrodipicolinate. The active-site Proton donor is the lysine 163. Residue glycine 169–threonine 170 participates in (S)-2,3,4,5-tetrahydrodipicolinate binding.

Belongs to the DapB family. Homotetramer.

It localises to the cytoplasm. It carries out the reaction (S)-2,3,4,5-tetrahydrodipicolinate + NAD(+) + H2O = (2S,4S)-4-hydroxy-2,3,4,5-tetrahydrodipicolinate + NADH + H(+). It catalyses the reaction (S)-2,3,4,5-tetrahydrodipicolinate + NADP(+) + H2O = (2S,4S)-4-hydroxy-2,3,4,5-tetrahydrodipicolinate + NADPH + H(+). The protein operates within amino-acid biosynthesis; L-lysine biosynthesis via DAP pathway; (S)-tetrahydrodipicolinate from L-aspartate: step 4/4. Functionally, catalyzes the conversion of 4-hydroxy-tetrahydrodipicolinate (HTPA) to tetrahydrodipicolinate. The chain is 4-hydroxy-tetrahydrodipicolinate reductase from Salmonella choleraesuis (strain SC-B67).